Here is a 197-residue protein sequence, read N- to C-terminus: CASP-like protein 1B2 (197 aa).

The residue at position 2 (alanine 2) is an N-acetylalanine. The Cytoplasmic portion of the chain corresponds to alanine 2–lysine 17. The helical transmembrane segment at leucine 18–serine 38 threads the bilayer. Over leucine 39 to alanine 69 the chain is Extracellular. The chain crosses the membrane as a helical span at residues phenylalanine 70–leucine 90. At glutamine 91 to serine 106 the chain is on the cytoplasmic side. Residues isoleucine 107–phenylalanine 127 form a helical membrane-spanning segment. Residues valine 128–alanine 156 are Extracellular-facing. The chain crosses the membrane as a helical span at residues glycine 157–isoleucine 177. Residues serine 178 to valine 197 lie on the Cytoplasmic side of the membrane.

Belongs to the Casparian strip membrane proteins (CASP) family. Homodimer and heterodimers.

It is found in the cell membrane. The sequence is that of CASP-like protein 1B2 from Arabidopsis lyrata subsp. lyrata (Lyre-leaved rock-cress).